Consider the following 299-residue polypeptide: GTPase Era (299 aa).

The Era-type G domain maps to 4–171 (KSGFVAILGR…MEILKENLDE (168 aa)). The segment at 12 to 19 (GRPNVGKS) is G1. GTP is bound at residue 12–19 (GRPNVGKS). Residues 38–42 (QTTRN) are G2. Residues 59–62 (DTPG) form a G3 region. GTP-binding positions include 59–63 (DTPGI) and 121–124 (NKID). Residues 121 to 124 (NKID) form a G4 region. A G5 region spans residues 150-152 (ISA). Residues 202 to 280 (TREEIPHSVA…FLETWVKVKK (79 aa)) enclose the KH type-2 domain.

The protein belongs to the TRAFAC class TrmE-Era-EngA-EngB-Septin-like GTPase superfamily. Era GTPase family. Monomer.

The protein resides in the cytoplasm. It localises to the cell membrane. Its function is as follows. An essential GTPase that binds both GDP and GTP, with rapid nucleotide exchange. Plays a role in 16S rRNA processing and 30S ribosomal subunit biogenesis and possibly also in cell cycle regulation and energy metabolism. The chain is GTPase Era from Streptococcus suis (strain 98HAH33).